Reading from the N-terminus, the 173-residue chain is Alpha-crystallin A chain (173 aa).

Position 1 is an N-acetylmethionine (methionine 1). The interval 1-63 is required for complex formation with BFSP1 and BFSP2; sequence MDIAIQHPWF…RTVLDSGISE (63 aa). A Deamidated glutamine; partial modification is found at glutamine 6. A Phosphoserine modification is found at serine 45. Glutamine 50 carries the deamidated glutamine; partial modification. The 111-residue stretch at 52-162 folds into the sHSP domain; it reads LFRTVLDSGI…GHSERAIPVS (111 aa). 2 positions are modified to N6-acetyllysine: lysine 70 and lysine 99. Histidine 100 is a Zn(2+) binding site. Position 101 is a deamidated asparagine; partial (asparagine 101). Residues glutamate 102 and histidine 107 each coordinate Zn(2+). Serine 122 is subject to Phosphoserine. The residue at position 123 (asparagine 123) is a Deamidated asparagine; partial. The segment at 144–173 is disordered; that stretch reads PKVPSGVDAGHSERAIPVSREEKPSSAPSS. A compositionally biased stretch (basic and acidic residues) spans 153–167; it reads GHSERAIPVSREEKP. Zn(2+) is bound at residue histidine 154. O-linked (GlcNAc) serine glycosylation is present at serine 162.

This sequence belongs to the small heat shock protein (HSP20) family. Heteromer composed of three CRYAA and one CRYAB subunits. Inter-subunit bridging via zinc ions enhances stability, which is crucial as there is no protein turn over in the lens. Can also form homodimers and homotetramers (dimers of dimers) which serve as the building blocks of homooligomers. Within homooligomers, the zinc-binding motif is created from residues of 3 different molecules. His-100 and Glu-102 from one molecule are ligands of the zinc ion, and His-107 and His-154 residues from additional molecules complete the site with tetrahedral coordination geometry. Part of a complex required for lens intermediate filament formation composed of BFSP1, BFSP2 and CRYAA. Acetylation at Lys-70 may increase chaperone activity. Post-translationally, undergoes age-dependent proteolytical cleavage at the C-terminus.

The protein localises to the cytoplasm. The protein resides in the nucleus. Functionally, contributes to the transparency and refractive index of the lens. Acts as a chaperone, preventing aggregation of various proteins under a wide range of stress conditions. Required for the correct formation of lens intermediate filaments as part of a complex composed of BFSP1, BFSP2 and CRYAA. This chain is Alpha-crystallin A chain (CRYAA), found in Canis lupus familiaris (Dog).